The chain runs to 443 residues: tRNA modification GTPase MnmE (443 aa).

The (6S)-5-formyl-5,6,7,8-tetrahydrofolate site is built by Arg23, Glu80, and Lys120. Positions 217 to 367 (GFEVVILGAP…LLAEIGRRAA (151 aa)) constitute a TrmE-type G domain. GTP-binding positions include 227 to 232 (NAGKSS), 246 to 252 (TDEPGTT), and 271 to 274 (DTAG). The Mg(2+) site is built by Ser231 and Thr252. A (6S)-5-formyl-5,6,7,8-tetrahydrofolate-binding site is contributed by Lys443.

This sequence belongs to the TRAFAC class TrmE-Era-EngA-EngB-Septin-like GTPase superfamily. TrmE GTPase family. In terms of assembly, homodimer. Heterotetramer of two MnmE and two MnmG subunits. The cofactor is K(+).

It is found in the cytoplasm. Exhibits a very high intrinsic GTPase hydrolysis rate. Involved in the addition of a carboxymethylaminomethyl (cmnm) group at the wobble position (U34) of certain tRNAs, forming tRNA-cmnm(5)s(2)U34. This Mesorhizobium japonicum (strain LMG 29417 / CECT 9101 / MAFF 303099) (Mesorhizobium loti (strain MAFF 303099)) protein is tRNA modification GTPase MnmE.